We begin with the raw amino-acid sequence, 726 residues long: Tripartite terminase subunit 1 (726 aa).

The C3H1-type zinc finger occupies 189-217 (CMKCYEELTLTPNQGKSLRRRLHGKFCNH). 626–633 (YNDVFGKR) contributes to the ATP binding site.

Belongs to the herpesviridae TRM1 protein family. As to quaternary structure, associates with TRM2 and TRM3 to form the tripartite terminase complex. Interacts with portal protein.

The protein localises to the host nucleus. Functionally, component of the molecular motor that translocates viral genomic DNA in empty capsid during DNA packaging. Forms a tripartite terminase complex together with TRM2 and TRM3 in the host cytoplasm. Once the complex reaches the host nucleus, it interacts with the capsid portal vertex. This portal forms a ring in which genomic DNA is translocated into the capsid. TRM1 carries an endonuclease activity that plays an important role for the cleavage of concatemeric viral DNA into unit length genomes. In Homo sapiens (Human), this protein is Tripartite terminase subunit 1.